Consider the following 439-residue polypeptide: FK506-binding protein 59 (439 aa).

2 PPIase FKBP-type domains span residues 32-120 (GCTV…LGWK) and 149-235 (GAFV…VDCG). 3 TPR repeats span residues 252-285 (AKVYKEKGTNYFKKENWALAIKMYTKCKNILPTT), 297-330 (VATHSNIALCHQKSNDHFEAKQECNEVLALDKNN), and 331-364 (VKALYRRGQCNLTINELEDALEDFQKVIQLEPGN).

As to quaternary structure, interacts with inaD and trpl, and may be part of the inaD signaling complex. Expression in the embryo is limited to three tissues: lymph glands, Garland cells and oenocyte cells.

The enzyme catalyses [protein]-peptidylproline (omega=180) = [protein]-peptidylproline (omega=0). In terms of biological role, may have a role in phototransduction; inhibits or prevents Ca(2+) induced stimulation of the trpl ion channel. The protein is FK506-binding protein 59 of Drosophila melanogaster (Fruit fly).